A 1524-amino-acid chain; its full sequence is MKKEVRKVRIALASPEKIRSWSYGEVEKPETINYRTLKPERDGLFDERIFGPIKDYECACGKYKRQRFEGKVCERCGVEVTKSIVRRYRMGHIELATPAAHIWFVKDVPSKIGTLLDLSATELEQVLYFSKYIVLDPKGAILNGVPVEKRQLLTDEEYRELRYGKQETYPLPPGVDALVKDGEEVVKGQELAPGVVSRLDGVALYRFPRRVRVEYVKKERAGLRLPLAAWVEKEAYKPGEILAELPEPYLFRAEEEGVVELKELEEGAFLVLRQEDEPVATYFLPVGMTPLVVHGEIVEKGQPLAEAKGLLRMPRQVRAAQVEAEEEGETVYLTLFLEWTEPKDYRVQPHMNVVVPEGARVEAGDKIVAAIDPEEEVIAEAEGVVHLHEPASILVVKARVYPFEDDVEVSTGDRVAPGDVLADGGKVKSDVYGRVEVDLVRNVVRVVESYDIDARMGAEAIQQLLKELDLEALEKELLEEMKHPSRARRAKARKRLEVVRAFLDSGNRPEWMILEAVPVLPPDLRPMVQVDGGRFATSDLNDLYRRLINRNNRLKKLLAQGAPEIIIRNEKRMLQEAVDALLDNGRRGAPVTNPGSDRPLRSLTDILSGKQGRFRQNLLGKRVDYSGRSVIVVGPQLKLHQCGLPKRMALELFKPFLLKKMEEKGIAPNVKAARRMLERQRDIKDEVWDALEEVIHGKVVLLNRAPTLHRLGIQAFQPVLVEGQSIQLHPLVCEAFNADFDGDQMAVHVPLSSFAQAEARIQMLSAHNLLSPASGEPLAKPSRDIILGLYYITQVRKEKKGAGLEFATPEEALAAHERGEVALNAPIKVAGRETSVGRLKYVFANPDEALLAVAHGIVDLQDVVTVRYMGKRLETSPGRILFARIVAEAVEDEKVAWELIQLDVPQEKNSLKDLVYQAFLRLGMEKTARLLDALKYYGFTFSTTSGITIGIDDAVIPEEKKQYLEEADRKLLQIEQAYEMGFLTDRERYDQILQLWTETTEKVTQAVFKNFEENYPFNPLYVMAQSGARGNPQQIRQLCGMRGLMQKPSGETFEVPVRSSFREGLTVLEYFISSHGARKGGADTALRTADSGYLTRKLVDVTHEIVVREADCGTTNYISVPLFQPDEVTRSLRLRKRADIEAGLYGRVLAREVEVLGVRLEEGRYLSMDDVHLLIKAAEAGEIQEVPVRSPLTCQTRYGVCQKCYGYDLSMARPVSIGEAVGIVAAQSIGEPGTQLTMRTFHTGGVAGAADITQGLPRVIELFEARRPKAKAVISEIDGVVRIEETEEKLSVFVESEGFSKEYKLPKEARLLAKDGDYVEAGQPLTRGAIDPHQLLEAKGPEAVERYLVEEIQKVYRAQGVKLHDKHIEIVVRQMMKYVEVTDPGDSRLLEGQVLEKWDVEALNERLIAEGKTPVAWKPLLMGVTKSALSTKSWLSAASFQNTTHVLTEAAIAGKKDELIGLKENVILGRLIPAGTGSDFVRFTQVVDQKTLKAIEEARKEAVEAKERPAARRGVKREQPGKQA.

The Zn(2+) site is built by C58, C60, C73, and C76. Mg(2+)-binding residues include D739, D741, and D743. Zn(2+) is bound by residues C1112, C1194, C1201, and C1204. The disordered stretch occupies residues 1501–1524 (EAVEAKERPAARRGVKREQPGKQA).

Belongs to the RNA polymerase beta' chain family. The RNAP catalytic core consists of 2 alpha, 1 beta, 1 beta' and 1 omega subunit. When a sigma factor is associated with the core the holoenzyme is formed, which can initiate transcription. Mg(2+) serves as cofactor. Requires Zn(2+) as cofactor.

It catalyses the reaction RNA(n) + a ribonucleoside 5'-triphosphate = RNA(n+1) + diphosphate. In terms of biological role, DNA-dependent RNA polymerase catalyzes the transcription of DNA into RNA using the four ribonucleoside triphosphates as substrates. In Thermus thermophilus (strain ATCC BAA-163 / DSM 7039 / HB27), this protein is DNA-directed RNA polymerase subunit beta'.